The sequence spans 334 residues: Fructose-1,6-bisphosphatase class 1 (334 aa).

Glutamate 89, aspartate 112, leucine 114, and aspartate 115 together coordinate Mg(2+). Substrate is bound by residues 115–118, asparagine 208, tyrosine 241, 259–261, and lysine 271; these read DGSS and YLY. Residue glutamate 277 participates in Mg(2+) binding.

Belongs to the FBPase class 1 family. In terms of assembly, homotetramer. Mg(2+) is required as a cofactor.

It localises to the cytoplasm. It catalyses the reaction beta-D-fructose 1,6-bisphosphate + H2O = beta-D-fructose 6-phosphate + phosphate. It functions in the pathway carbohydrate biosynthesis; gluconeogenesis. The polypeptide is Fructose-1,6-bisphosphatase class 1 (Pectobacterium atrosepticum (strain SCRI 1043 / ATCC BAA-672) (Erwinia carotovora subsp. atroseptica)).